We begin with the raw amino-acid sequence, 228 residues long: GDT1-like protein 5 (228 aa).

G2 is modified (N-acetylglycine). 6 helical membrane-spanning segments follow: residues 12-32, 39-59, 71-91, 133-153, 173-193, and 205-225; these read LAMT…AILA, LVLA…ATLG, THHI…WDGF, PFLT…NFFG, LGVV…AVLG, and IVAL…LLTP.

It belongs to the GDT1 family.

It localises to the membrane. This is GDT1-like protein 5 from Arabidopsis thaliana (Mouse-ear cress).